The following is a 210-amino-acid chain: MFGFLKQVGDYTRDAVDAARNLAQGFAVTFDHMQRRPVTVQYPYEKLIPSERYRGRIHYEFDKCIACEVCVRVCPINLPVVDWVMNKATKKKELRNYSIDFGVCIFCGNCVEYCPTNCLSMTEEYELAAFDRHSLNYDNVALGRLPTSVTTDPSVQPLRELVYLPAGEMDPHTVSADRPRAGKLPAEVLETLAPVKDEGQSSKAVLKEDA.

4Fe-4S ferredoxin-type domains lie at 55-84 and 95-124; these read GRIH…VDWV and RNYS…MTEE. Residues C64, C67, C70, C74, C104, C107, C110, and C114 each contribute to the [4Fe-4S] cluster site.

This sequence belongs to the complex I 23 kDa subunit family. NDH-1 is composed of at least 11 different subunits. The cofactor is [4Fe-4S] cluster.

It localises to the cellular thylakoid membrane. The catalysed reaction is a plastoquinone + NADH + (n+1) H(+)(in) = a plastoquinol + NAD(+) + n H(+)(out). The enzyme catalyses a plastoquinone + NADPH + (n+1) H(+)(in) = a plastoquinol + NADP(+) + n H(+)(out). In terms of biological role, NDH-1 shuttles electrons from an unknown electron donor, via FMN and iron-sulfur (Fe-S) centers, to quinones in the respiratory and/or the photosynthetic chain. The immediate electron acceptor for the enzyme in this species is believed to be plastoquinone. Couples the redox reaction to proton translocation, and thus conserves the redox energy in a proton gradient. This chain is NAD(P)H-quinone oxidoreductase subunit I, found in Synechococcus sp. (strain CC9902).